The following is a 684-amino-acid chain: Fidgetin-like protein 2 (684 aa).

The segment covering 27–41 (PEQHLDVSSTTSSPA) has biased composition (polar residues). Disordered stretches follow at residues 27–48 (PEQH…ELYS), 99–179 (PGAF…PHSS), and 292–403 (LDEE…SDPM). Over residues 160 to 179 (SNLSDSGYSGSSSCSGPHSS) the composition is skewed to low complexity. A431 is a binding site for ATP.

Belongs to the AAA ATPase family. The cofactor is Mg(2+). Highly expressed in vascular endothelial cells and neuronal cells.

The protein localises to the cytoplasm. Its subcellular location is the cell cortex. It catalyses the reaction ATP + H2O = ADP + phosphate + H(+). Microtubule-severing enzyme that negatively regulates cell migration and wound healing. In migrating cells, targets dynamic microtubules (MTs) at the leading edge and severs them, thereby suppressing motility. Negative regulator of axon regeneration that suppresses axonal growth by selectively severing dynamic MTs in the distal axon shaft and growth cone. Contributes to proper cell branching during endothelial and neuronal development. The polypeptide is Fidgetin-like protein 2 (fignl2) (Danio rerio (Zebrafish)).